The following is a 763-amino-acid chain: Phosphoglycerol transferase I (763 aa).

4 helical membrane-spanning segments follow: residues 1–21 (MSEL…AWKA), 26–46 (WWFA…ITLF), 77–97 (ILPG…LGWI), and 108–128 (FGYS…SPAF).

This sequence belongs to the OpgB family.

It localises to the cell inner membrane. It catalyses the reaction a phosphatidylglycerol + a membrane-derived-oligosaccharide D-glucose = a 1,2-diacyl-sn-glycerol + a membrane-derived-oligosaccharide 6-(glycerophospho)-D-glucose.. It functions in the pathway glycan metabolism; osmoregulated periplasmic glucan (OPG) biosynthesis. Functionally, transfers a phosphoglycerol residue from phosphatidylglycerol to the membrane-bound nascent glucan backbones. The chain is Phosphoglycerol transferase I from Escherichia coli O7:K1 (strain IAI39 / ExPEC).